Reading from the N-terminus, the 145-residue chain is Mitochondrial import receptor subunit TOM20 homolog (145 aa).

At Met1 to Ser6 the chain is on the mitochondrial intermembrane side. Residues Ala7–Phe24 form a helical membrane-spanning segment. The Cytoplasmic portion of the chain corresponds to Asp25–Glu145. Residues Lys35, Lys56, Lys61, and Lys68 each participate in a glycyl lysine isopeptide (Lys-Gly) (interchain with G-Cter in ubiquitin) cross-link. Phosphoserine is present on residues Ser135 and Ser138.

It belongs to the Tom20 family. As to quaternary structure, forms part of the preprotein translocase complex of the outer mitochondrial membrane (TOM complex) which consists of at least 7 different proteins (TOMM5, TOMM6, TOMM7, TOMM20, TOMM22, TOMM40 and TOMM70). Interacts with TOM22. Interacts with APEX1. Interacts with TBC1D21. Upon mitochondrial depolarization, interacts with PINK1; the interaction is required for PINK1-TOM-TIM23 supercomplex formation which is critical for PINK1 stabilization at the outer mitochondrial membrane, kinase activation and downstream mitophagy. In terms of processing, ubiquitinated by PRKN during mitophagy, leading to its degradation and enhancement of mitophagy. Deubiquitinated by USP30. As to expression, expressed in brain, kidney, stomach, colon, jejunum, ileum, testis, ovary and oviduct (at protein level). In the brain, expressed in neural cells of the cerebrum and cerebellum (at protein level). In the kidney, expressed in the proximal to distal tubule in the cortex and the outer and inner zones of the medulla (at protein level). In the stomach, expressed in the basal layer of stratified squamous epithelia in the forestomach and in the gastric pit and fundic gland of the glandular stomach (at protein level). Expressed in epithelial cells of the jejunum, ileum, and colon (at protein level). In the testis, expressed by spermatocytes and spermatogonia (at protein level). In the ovaries, expressed by follicular epithelial cells and corpus luteum cells (at protein level). In the oviduct, expressed in the epithelia of the isthmus and the ciliated cells of the ampulla (at protein level). Expressed in the sperm midpiece (at protein level).

The protein localises to the mitochondrion outer membrane. Its function is as follows. Central component of the receptor complex responsible for the recognition and translocation of cytosolically synthesized mitochondrial preproteins. Together with TOM22 functions as the transit peptide receptor at the surface of the mitochondrion outer membrane and facilitates the movement of preproteins into the TOM40 translocation pore. Required for the translocation across the mitochondrial outer membrane of cytochrome P450 monooxygenases. In Mus musculus (Mouse), this protein is Mitochondrial import receptor subunit TOM20 homolog (Tomm20).